Here is a 127-residue protein sequence, read N- to C-terminus: MDVFKKGFSIAKEGVVGAVEKTKQGVTEAAEKTKEGVMYVGAKTKEGVVQSVTSVAEKTKEQANAVSEAVVSSVNTVATKTVEEVENIAVTSGVVHKEALKQPVPSQEDEAAKAEEQVAEETKSGGD.

2 tandem repeats follow at residues Glu-20–Ala-30 and Glu-31–Gly-41. A 4 X 11 AA tandem repeats of [EGSA]-K-T-K-[EQ]-[GQ]-V-X(4) region spans residues Glu-20 to Ser-67. Residues Ala-42–Ala-56 form a 3; approximate repeat. Copy 4 of the repeat occupies Glu-57–Ser-67. A phosphoserine mark is found at Ser-67, Ser-72, and Ser-124. The tract at residues Ala-99–Asp-127 is disordered. Residues Glu-110 to Asp-127 show a composition bias toward basic and acidic residues.

It belongs to the synuclein family. In terms of assembly, may be a centrosome-associated protein. Interacts with MYOC; affects its secretion and its aggregation. Post-translationally, phosphorylated by BARK1 and GRK5. Predominantly expressed in retina (predominantly in outer nuclear layer, also in inner segment of photoreceptor cells, some individual cells located in the inner nuclear layer, inner plexiform layer and in nerve fiber layer). Also found in brain and heart.

The protein resides in the cytoplasm. It is found in the perinuclear region. It localises to the cytoskeleton. The protein localises to the microtubule organizing center. Its subcellular location is the centrosome. The protein resides in the spindle. Plays a role in neurofilament network integrity. May be involved in modulating axonal architecture during development and in the adult. In vitro, increases the susceptibility of neurofilament-H to calcium-dependent proteases. May also function in modulating the keratin network in skin. Activates the MAPK and Elk-1 signal transduction pathway. In Bos taurus (Bovine), this protein is Gamma-synuclein (SNCG).